Reading from the N-terminus, the 709-residue chain is FACT complex subunit SSRP1 (709 aa).

Alanine 2 is subject to N-acetylalanine. Lysine 90 is covalently cross-linked (Glycyl lysine isopeptide (Lys-Gly) (interchain with G-Cter in SUMO2)). A Phosphothreonine modification is found at threonine 170. Lysine 233 is modified (N6-acetyllysine). Glycyl lysine isopeptide (Lys-Gly) (interchain with G-Cter in SUMO2) cross-links involve residues lysine 296 and lysine 364. Lysine 413 is subject to N6-acetyllysine. Residue serine 437 is modified to Phosphoserine. Residue tyrosine 441 is modified to Phosphotyrosine. Serine 444 carries the phosphoserine modification. Residue tyrosine 452 is modified to Phosphotyrosine. Residues 458–709 (EEGKIREENA…SEDSASGSDE (252 aa)) form a disordered region. Residues 470-496 (SSDDSGEETDESFNPGEEEEDVAEEFD) are compositionally biased toward acidic residues. Serine 471 bears the Phosphoserine mark. The segment covering 497-507 (SNASASSSSNE) has biased composition (low complexity). A Phosphoserine; by CK2 modification is found at serine 510. Residues 515 to 533 (KKRKQLKKAKMAKDRKSRK) show a composition bias toward basic residues. 2 stretches are compositionally biased toward basic and acidic residues: residues 534-546 (KPVE…DPNA) and 577-624 (LSKK…SSKR). The residue at position 542 (lysine 542) is an N6-acetyllysine. A DNA-binding region (HMG box) is located at residues 547 to 615 (PKRPMSAYML…DYEKAMKEYE (69 aa)). Basic residues predominate over residues 625 to 634 (DKSKKKKKVK). The span at 643–659 (PSRGSSSKSSSRQLSES) shows a compositional bias: low complexity. Serine 657, serine 659, serine 667, serine 668, serine 671, serine 672, and serine 673 each carry phosphoserine. Phosphoserine; by CK2 is present on serine 688. Residues 696 to 709 (TPPSSEDSASGSDE) show a composition bias toward polar residues.

The protein belongs to the SSRP1 family. As to quaternary structure, interacts with MYOG (via C-terminal region). Component of the FACT complex, a stable heterodimer of SSRP1 and SUPT16H. Also a component of a CK2-SPT16-SSRP1 complex which forms following UV irradiation, composed of SSRP1, SUPT16H, CSNK2A1, CSNK2A2 and CSNK2B. Binds to histone H3-H4 tetramers, but not to intact nucleosomes. Identified in a centromere complex containing histones H2A, H2B and H4, and at least CENPA, CENPB, CENPC, CENPT, CENPN, HJURP, SUPT16H, SSRP1 and RSF1. Interacts with isoform gamma of TP63. Interacts with FYTTD1/UIF. Interacts with SRF. Interacts with NEK9. (Microbial infection) Interacts with Herpes simplex virus 1 (HHV-1) protein ICP22; this interaction relocalizes the FACT complex to viral genomes in infected cells. Post-translationally, phosphorylated by CK2 following UV but not gamma irradiation. Phosphorylation inhibits its DNA-binding activity. In terms of processing, ubiquitinated. Polyubiquitinated following caspase cleavage resulting in degradation of the N-terminal ubiquitinated part of the cleaved protein. Sumoylated.

The protein resides in the nucleus. It localises to the nucleolus. The protein localises to the chromosome. Functionally, component of the FACT complex, a general chromatin factor that acts to reorganize nucleosomes. The FACT complex is involved in multiple processes that require DNA as a template such as mRNA elongation, DNA replication and DNA repair. During transcription elongation the FACT complex acts as a histone chaperone that both destabilizes and restores nucleosomal structure. It facilitates the passage of RNA polymerase II and transcription by promoting the dissociation of one histone H2A-H2B dimer from the nucleosome, then subsequently promotes the reestablishment of the nucleosome following the passage of RNA polymerase II. The FACT complex is probably also involved in phosphorylation of 'Ser-392' of p53/TP53 via its association with CK2 (casein kinase II). Binds specifically to double-stranded DNA and at low levels to DNA modified by the antitumor agent cisplatin. May potentiate cisplatin-induced cell death by blocking replication and repair of modified DNA. Also acts as a transcriptional coactivator for p63/TP63. The protein is FACT complex subunit SSRP1 (SSRP1) of Homo sapiens (Human).